Reading from the N-terminus, the 499-residue chain is Glycerol kinase (499 aa).

Position 12 (Thr12) interacts with ADP. Residues Thr12, Thr13, and Ser14 each coordinate ATP. A sn-glycerol 3-phosphate-binding site is contributed by Thr12. Arg16 provides a ligand contact to ADP. Residues Arg82, Glu83, Tyr134, and Asp240 each coordinate sn-glycerol 3-phosphate. Residues Arg82, Glu83, Tyr134, Asp240, and Gln241 each coordinate glycerol. ADP contacts are provided by Thr262 and Gly306. The ATP site is built by Thr262, Gly306, Gln310, and Gly412. Residues Gly412 and Asn416 each coordinate ADP.

This sequence belongs to the FGGY kinase family.

It carries out the reaction glycerol + ATP = sn-glycerol 3-phosphate + ADP + H(+). The protein operates within polyol metabolism; glycerol degradation via glycerol kinase pathway; sn-glycerol 3-phosphate from glycerol: step 1/1. With respect to regulation, inhibited by fructose 1,6-bisphosphate (FBP). Functionally, key enzyme in the regulation of glycerol uptake and metabolism. Catalyzes the phosphorylation of glycerol to yield sn-glycerol 3-phosphate. This is Glycerol kinase from Nocardia farcinica (strain IFM 10152).